We begin with the raw amino-acid sequence, 471 residues long: Phosphoglycerate kinase (471 aa).

Substrate is bound by residues 24–26 (DFN), Arg41, 64–67 (HLSR), Arg127, and Arg169. ATP is bound by residues Lys220, Gly307, Glu338, and 368–371 (GGDS). Residues 417–471 (KVEAVKEKTTTTTESASKEKSSTAKTASKPATSKTTAAKKPAEKKPAAKKPAAKK) form a disordered region. Low complexity predominate over residues 439 to 455 (TAKTASKPATSKTTAAK).

Belongs to the phosphoglycerate kinase family. As to quaternary structure, monomer.

The protein localises to the cytoplasm. The catalysed reaction is (2R)-3-phosphoglycerate + ATP = (2R)-3-phospho-glyceroyl phosphate + ADP. The protein operates within carbohydrate degradation; glycolysis; pyruvate from D-glyceraldehyde 3-phosphate: step 2/5. The protein is Phosphoglycerate kinase of Malacoplasma penetrans (strain HF-2) (Mycoplasma penetrans).